The following is a 201-amino-acid chain: Ras-related protein Rab-9A (201 aa).

An N-acetylalanine modification is found at Ala2. GTP is bound by residues Gly17, Val18, Gly19, Lys20, Ser21, Ser22, Ser34, His38, and Thr39. Residue Ser21 participates in Mg(2+) binding. The short motif at 31–42 (KFDSQLFHTIGV) is the Switch 1 element. Position 34 is a phosphoserine (Ser34). Residues Thr39 and Asp62 each coordinate Mg(2+). Residues 64–78 (AGQERFRSLRTPFYR) carry the Switch 2 motif. Residues Gly65, Asn124, Lys125, Asp127, and Lys156 each coordinate GTP. Ser179 is modified (phosphoserine). Thr187 carries the phosphothreonine modification. S-geranylgeranyl cysteine attachment occurs at residues Cys200 and Cys201.

It belongs to the small GTPase superfamily. Rab family. Interacts (preferentially in its GTP-bound form) with GCC2 (via its GRIP domain). Interacts (GTP-bound form) with SGSM1; the GDP-bound form has much lower affinity for SGSM1. Interacts with SGSM2. The GTP-bound form but not the GDP-bound form interacts with HPS4 and the BLOC-3 complex (heterodimer of HPS1 and HPS4) but does not interact with HPS1 alone. Interacts (GTP-bound form) with NDE1; two RAB9A-GTP molecules lie on the opposite sides of the NDE1 homodimer; the interaction leads to RAB9A-dynein motor tethering. Interacts (GTP-bound form) with NDEL1. Mg(2+) is required as a cofactor.

It localises to the cell membrane. The protein localises to the endoplasmic reticulum membrane. The protein resides in the golgi apparatus membrane. Its subcellular location is the late endosome. It is found in the cytoplasmic vesicle. It localises to the phagosome membrane. The protein localises to the phagosome. The protein resides in the cytoplasmic vesicle membrane. Its subcellular location is the melanosome. It carries out the reaction GTP + H2O = GDP + phosphate + H(+). With respect to regulation, regulated by guanine nucleotide exchange factors (GEFs) which promote the exchange of bound GDP for free GTP. Regulated by GTPase activating proteins (GAPs) which increase the GTP hydrolysis activity. Inhibited by GDP dissociation inhibitors (GDIs). The small GTPases Rab are key regulators of intracellular membrane trafficking, from the formation of transport vesicles to their fusion with membranes. Rabs cycle between an inactive GDP-bound form and an active GTP-bound form that is able to recruit to membranes different sets of downstream effectors directly responsible for vesicle formation, movement, tethering and fusion. RAB9A is involved in the transport of proteins between the endosomes and the trans-Golgi network (TGN). Specifically uses NDE1/NDEL1 as an effector to interact with the dynein motor complex in order to control retrograde trafficking of RAB9-associated late endosomes to the TGN. Involved in the recruitment of SGSM2 to melanosomes and is required for the proper trafficking of melanogenic enzymes TYR, TYRP1 and DCT/TYRP2 to melanosomes in melanocytes. In Rattus norvegicus (Rat), this protein is Ras-related protein Rab-9A.